A 545-amino-acid chain; its full sequence is Alpha-galactosidase A (545 aa).

Residues 1–31 (MIQGLESIMNQGTKRILLAATLAATPWQVYG) form the signal peptide. A disulfide bond links C54 and C86. 4 N-linked (GlcNAc...) asparagine glycosylation sites follow: N57, N95, N101, and N131. An intrachain disulfide couples C134 to C164. D162 functions as the Nucleophile in the catalytic mechanism. Residue N211 is glycosylated (N-linked (GlcNAc...) asparagine). The active-site Proton donor is the D220. N-linked (GlcNAc...) asparagine glycosylation is found at N363 and N444. One can recognise a Ricin B-type lectin domain in the interval 421-518 (CSSVVPTGLV…KNAKTDGCLT (98 aa)). Intrachain disulfides connect C438–C452 and C477–C490.

Belongs to the glycosyl hydrolase 27 family. Post-translationally, a C-terminal Ser/Thr-rich region may provide possible sites for O-glycosylation.

The protein resides in the secreted. The enzyme catalyses Hydrolysis of terminal, non-reducing alpha-D-galactose residues in alpha-D-galactosides, including galactose oligosaccharides, galactomannans and galactolipids.. Hydrolyzes a variety of simple alpha-D-galactoside as well as more complex molecules such as oligosaccharides and polysaccharides. The polypeptide is Alpha-galactosidase A (aglA) (Aspergillus niger).